We begin with the raw amino-acid sequence, 798 residues long: Disintegrin and metalloproteinase domain-containing protein B (798 aa).

A signal peptide spans 1 to 23 (MKAFSCLLAVIATAASLFQHVDA). The Extracellular segment spans residues 24–706 (SHARDKLNNI…VSDWVSRHKP (683 aa)). N32, N226, N227, N313, and N407 each carry an N-linked (GlcNAc...) asparagine glycan. The region spanning 271 to 510 (KVALIGVVAD…RTILTNCLTT (240 aa)) is the Peptidase M12B domain. 3 disulfide bridges follow: C395–C495, C448–C459, and C580–C600. H431 contributes to the Zn(2+) binding site. Residue E432 is part of the active site. Zn(2+) contacts are provided by H435 and H441. Residues 519–608 (GQQCGNGIVE…DCPHDIHSKD (90 aa)) enclose the Disintegrin domain. A helical transmembrane segment spans residues 707–727 (IVIGVAVGAGCLLLLAIASCI). The Cytoplasmic portion of the chain corresponds to 728–798 (CGRSRRQRPR…PGHMPPTRYA (71 aa)). The interval 734-798 (QRPRNRKMPP…PGHMPPTRYA (65 aa)) is disordered. Residues 775 to 792 (NNIPPPINAPPPAYPGHM) are compositionally biased toward pro residues.

Requires Zn(2+) as cofactor.

It localises to the membrane. Its function is as follows. Probable zinc protease. The chain is Disintegrin and metalloproteinase domain-containing protein B (ADM-B) from Trichophyton verrucosum (strain HKI 0517).